Consider the following 488-residue polypeptide: Glutamate--tRNA ligase (488 aa).

Positions 12–22 (PSPTGYMHVGN) match the 'HIGH' region motif. 4 residues coordinate Zn(2+): cysteine 109, cysteine 111, cysteine 136, and histidine 138. The short motif at 253–257 (KLSKR) is the 'KMSKS' region element. Lysine 256 contributes to the ATP binding site.

This sequence belongs to the class-I aminoacyl-tRNA synthetase family. Glutamate--tRNA ligase type 1 subfamily. As to quaternary structure, monomer. Zn(2+) is required as a cofactor.

Its subcellular location is the cytoplasm. It carries out the reaction tRNA(Glu) + L-glutamate + ATP = L-glutamyl-tRNA(Glu) + AMP + diphosphate. Its function is as follows. Catalyzes the attachment of glutamate to tRNA(Glu) in a two-step reaction: glutamate is first activated by ATP to form Glu-AMP and then transferred to the acceptor end of tRNA(Glu). This chain is Glutamate--tRNA ligase, found in Clostridium tetani (strain Massachusetts / E88).